Here is a 92-residue protein sequence, read N- to C-terminus: Actobindin-A (92 aa).

Disordered regions lie at residues 1-33 (MSAPNPLLAEINKGADLKHTETQDKSAPKIGSD) and 54-92 (LKHAETDDKSAPKINENTTIKPNNHSALLGEIKAKAADS). 2 WH2 domains span residues 3-20 (APNPLLAEINKGADLKHT) and 40-57 (DHASLLSEVEQGAKLKHA). 2 stretches are compositionally biased toward basic and acidic residues: residues 13 to 33 (KGADLKHTETQDKSAPKIGSD) and 54 to 64 (LKHAETDDKSA). The span at 68-79 (NENTTIKPNNHS) shows a compositional bias: polar residues.

As to quaternary structure, monomer.

In terms of biological role, is able to bind two actin monomers at high concentrations of G-actin. Inhibits actin polymerization by sequestering G-actin and stabilizing actin dimers. This is Actobindin-A (abnA) from Dictyostelium discoideum (Social amoeba).